Here is a 298-residue protein sequence, read N- to C-terminus: Leucine-rich repeat-containing protein 38 (298 aa).

The signal sequence occupies residues 1 to 31; it reads MSLCVAPRHPTGAAAALGLGSLLVLLGPGRA. 2 cysteine pairs are disulfide-bonded: cysteine 32-cysteine 38 and cysteine 36-cysteine 46. Residues 32–60 form the LRRNT domain; that stretch reads CPAGCACTDPHTVDCRDRGLPSVPDPFPL. Topologically, residues 32-251 are extracellular; the sequence is CPAGCACTDP…ECKFSLSLTD (220 aa). 5 LRR repeats span residues 61-82, 85-106, 109-130, 133-154, and 157-177; these read DVRK…FFIF, DLVY…TFSG, KLAF…AFRS, RLVK…AFES, and SLQV…AALD. A glycan (N-linked (GlcNAc...) asparagine) is linked at asparagine 119. Residues 190 to 245 enclose the LRRCT domain; sequence NPWLCDCDFAHLFSWIQENTSKLPKGLDAIQCSLPMEDRRVALRELSEASFSECKF. Disulfide bonds link cysteine 194-cysteine 221 and cysteine 196-cysteine 243. The chain crosses the membrane as a helical span at residues 252–272; the sequence is LFIIIFSGVAVSIAAIISSFF. Residues 273–298 lie on the Cytoplasmic side of the membrane; sequence LATVVQCFQRCAPNKDTEDEDDDEDD.

As to quaternary structure, interacts with KCNMA1.

It is found in the cell membrane. In terms of biological role, auxiliary protein of the large-conductance, voltage and calcium-activated potassium channel (BK alpha). Modulates gating properties by producing a marked shift in the BK channel's voltage dependence of activation in the hyperpolarizing direction, and in the absence of calcium. This Mus musculus (Mouse) protein is Leucine-rich repeat-containing protein 38 (Lrrc38).